The primary structure comprises 184 residues: Peptidyl-tRNA hydrolase (184 aa).

Position 14 (Tyr14) interacts with tRNA. The active-site Proton acceptor is the His19. Phe60 and Asn62 together coordinate tRNA.

It belongs to the PTH family. Monomer.

It is found in the cytoplasm. The enzyme catalyses an N-acyl-L-alpha-aminoacyl-tRNA + H2O = an N-acyl-L-amino acid + a tRNA + H(+). Functionally, hydrolyzes ribosome-free peptidyl-tRNAs (with 1 or more amino acids incorporated), which drop off the ribosome during protein synthesis, or as a result of ribosome stalling. In terms of biological role, catalyzes the release of premature peptidyl moieties from peptidyl-tRNA molecules trapped in stalled 50S ribosomal subunits, and thus maintains levels of free tRNAs and 50S ribosomes. The chain is Peptidyl-tRNA hydrolase from Mesomycoplasma hyopneumoniae (strain 7448) (Mycoplasma hyopneumoniae).